An 89-amino-acid chain; its full sequence is Small ribosomal subunit protein uS15 (89 aa).

Belongs to the universal ribosomal protein uS15 family. In terms of assembly, part of the 30S ribosomal subunit. Forms a bridge to the 50S subunit in the 70S ribosome, contacting the 23S rRNA.

One of the primary rRNA binding proteins, it binds directly to 16S rRNA where it helps nucleate assembly of the platform of the 30S subunit by binding and bridging several RNA helices of the 16S rRNA. In terms of biological role, forms an intersubunit bridge (bridge B4) with the 23S rRNA of the 50S subunit in the ribosome. The protein is Small ribosomal subunit protein uS15 of Nitratidesulfovibrio vulgaris (strain DP4) (Desulfovibrio vulgaris).